The chain runs to 429 residues: DNA primase DnaG (429 aa).

Residues 172 to 246 (DSIIVVEGRN…DVDFIARAPP (75 aa)) enclose the Toprim domain. Positions 178, 220, and 222 each coordinate Mg(2+). Residues 287-322 (RNTKELEERQGNELKNERPEKINENEESEKNVELKE) form a disordered region.

Belongs to the archaeal DnaG primase family. In terms of assembly, forms a ternary complex with MCM helicase and DNA. Component of the archaeal exosome complex. Mg(2+) serves as cofactor.

It catalyses the reaction ssDNA + n NTP = ssDNA/pppN(pN)n-1 hybrid + (n-1) diphosphate.. Its function is as follows. RNA polymerase that catalyzes the synthesis of short RNA molecules used as primers for DNA polymerase during DNA replication. Also part of the exosome, which is a complex involved in RNA degradation. Acts as a poly(A)-binding protein that enhances the interaction between heteromeric, adenine-rich transcripts and the exosome. The sequence is that of DNA primase DnaG from Picrophilus torridus (strain ATCC 700027 / DSM 9790 / JCM 10055 / NBRC 100828 / KAW 2/3).